A 72-amino-acid polypeptide reads, in one-letter code: Alpha-conotoxin SII (72 aa).

The first 21 residues, 1–21, serve as a signal peptide directing secretion; it reads MGMRMMFTVFLLVVLATTVVS. A propeptide spanning residues 22–50 is cleaved from the precursor; it reads FPSDRASDGRDDEAKDERSDMHESDRNGR. Positions 23–51 are disordered; that stretch reads PSDRASDGRDDEAKDERSDMHESDRNGRG. The span at 26 to 49 shows a compositional bias: basic and acidic residues; that stretch reads RASDGRDDEAKDERSDMHESDRNG. 3 disulfides stabilise this stretch: Cys52-Cys68, Cys53-Cys58, and Cys54-Cys64. Positions 70 to 72 are excised as a propeptide; the sequence is RTL.

Belongs to the conotoxin A superfamily. The disulfide bond Cys-52-Cys-68 (Cys I-VI), which corresponds to an extra disulfide bond when compared to the cysteine framework I (CC-C-C), does contribute to conotoxin SII stability and imparts a unique binding mode at the nAChR. Expressed by the venom duct.

The protein resides in the secreted. Alpha-conotoxins act on postsynaptic membranes, they bind to the nicotinic acetylcholine receptors (nAChR) and thus inhibit them. This toxin potently inhibits the rodent muscle nAChR (IC(50)=120 nM (adult subtype, alpha-1-beta-1-delta-epsilon/CHRNA1-CHRNB1-CHRND-CHRNE) and IC(50)=370 nM (fetal subtype, alpha-1-beta-1-gamma-delta/CHRNA1-CHRNB1-CHRNG-CHRND)) and weakly inhibits neuronal nAChRs. In contrast to alpha-conotoxins bearing 2 disulfide bonds (framework I), this conotoxin acts via a unique binding mode with the helix and the N- and C-termini buried in the binding pocket of muscle nAChRs. The chain is Alpha-conotoxin SII from Conus striatus (Striated cone).